The sequence spans 232 residues: UPF0758 protein Amet_2289 (232 aa).

The MPN domain maps to 110-232 (RIKSPDDVSN…YYSLKEKSMM (123 aa)). Zn(2+)-binding residues include His-181, His-183, and Asp-194. The JAMM motif motif lies at 181–194 (HNHPSGDPSPSGED).

The protein belongs to the UPF0758 family.

The polypeptide is UPF0758 protein Amet_2289 (Alkaliphilus metalliredigens (strain QYMF)).